A 501-amino-acid polypeptide reads, in one-letter code: Histidine--tRNA ligase (501 aa).

Belongs to the class-II aminoacyl-tRNA synthetase family. As to quaternary structure, homodimer.

The protein resides in the cytoplasm. It carries out the reaction tRNA(His) + L-histidine + ATP = L-histidyl-tRNA(His) + AMP + diphosphate + H(+). This chain is Histidine--tRNA ligase, found in Methylocella silvestris (strain DSM 15510 / CIP 108128 / LMG 27833 / NCIMB 13906 / BL2).